A 184-amino-acid polypeptide reads, in one-letter code: Isopentenyl-diphosphate Delta-isomerase (184 aa).

Mn(2+) is bound by residues His26 and His33. The 135-residue stretch at 31-165 folds into the Nudix hydrolase domain; that stretch reads PLHLAFSCYL…PSAFSPWLGL (135 aa). Residue Cys68 is part of the active site. His70 contributes to the Mn(2+) binding site. Glu88 provides a ligand contact to Mg(2+). Mn(2+)-binding residues include Glu115 and Glu117. Glu117 is a catalytic residue.

It belongs to the IPP isomerase type 1 family. Mg(2+) is required as a cofactor. The cofactor is Mn(2+).

Its subcellular location is the cytoplasm. The enzyme catalyses isopentenyl diphosphate = dimethylallyl diphosphate. The protein operates within isoprenoid biosynthesis; dimethylallyl diphosphate biosynthesis; dimethylallyl diphosphate from isopentenyl diphosphate: step 1/1. Its function is as follows. Catalyzes the 1,3-allylic rearrangement of the homoallylic substrate isopentenyl (IPP) to its highly electrophilic allylic isomer, dimethylallyl diphosphate (DMAPP). The protein is Isopentenyl-diphosphate Delta-isomerase of Paenarthrobacter aurescens (strain TC1).